The sequence spans 39 residues: Cytochrome b559 subunit beta (39 aa).

Residues 14 to 30 (WLAVHGLAIPTVFFLGS) form a helical membrane-spanning segment. Histidine 18 serves as a coordination point for heme.

It belongs to the PsbE/PsbF family. In terms of assembly, heterodimer of an alpha subunit and a beta subunit. PSII is composed of 1 copy each of membrane proteins PsbA, PsbB, PsbC, PsbD, PsbE, PsbF, PsbH, PsbI, PsbJ, PsbK, PsbL, PsbM, PsbT, PsbX, PsbY, PsbZ, Psb30/Ycf12, at least 3 peripheral proteins of the oxygen-evolving complex and a large number of cofactors. It forms dimeric complexes. Requires heme b as cofactor.

It localises to the plastid membrane. Its function is as follows. This b-type cytochrome is tightly associated with the reaction center of photosystem II (PSII). PSII is a light-driven water:plastoquinone oxidoreductase that uses light energy to abstract electrons from H(2)O, generating O(2) and a proton gradient subsequently used for ATP formation. It consists of a core antenna complex that captures photons, and an electron transfer chain that converts photonic excitation into a charge separation. This chain is Cytochrome b559 subunit beta, found in Cuscuta gronovii (Common dodder).